The primary structure comprises 88 residues: Small ribosomal subunit protein bS20 (88 aa).

Belongs to the bacterial ribosomal protein bS20 family.

Functionally, binds directly to 16S ribosomal RNA. The protein is Small ribosomal subunit protein bS20 of Desulforudis audaxviator (strain MP104C).